Reading from the N-terminus, the 204-residue chain is Large ribosomal subunit protein bL25 (204 aa).

This sequence belongs to the bacterial ribosomal protein bL25 family. CTC subfamily. In terms of assembly, part of the 50S ribosomal subunit; part of the 5S rRNA/L5/L18/L25 subcomplex. Contacts the 5S rRNA. Binds to the 5S rRNA independently of L5 and L18.

In terms of biological role, this is one of the proteins that binds to the 5S RNA in the ribosome where it forms part of the central protuberance. The sequence is that of Large ribosomal subunit protein bL25 from Wolbachia sp. subsp. Brugia malayi (strain TRS).